We begin with the raw amino-acid sequence, 733 residues long: Protein PAT1 homolog 2 (733 aa).

2 disordered regions span residues 42–75 and 337–366; these read LDQE…PEAL and LHPQ…PDPY. Residues 49 to 59 are compositionally biased toward basic and acidic residues; it reads EPVKLEDDHTK. Positions 346–356 are enriched in low complexity; that stretch reads SQRQRPQSSSR.

It belongs to the PAT1 family. As to quaternary structure, interacts with ribonucleoprotein complex components. Interacts with cpeb. In terms of tissue distribution, oocyte-specific protein. Expressed throughout oogenesis but is not detectable in eggs, embryos, nor in adult tissues (at protein level).

It is found in the cytoplasm. The protein resides in the nucleus. Its function is as follows. RNA-binding protein that acts as a translational repressor. When overexpressed, able to disperse P-bodies. In Xenopus laevis (African clawed frog), this protein is Protein PAT1 homolog 2 (patl2).